Consider the following 110-residue polypeptide: ATP-dependent Clp protease adapter protein ClpS (110 aa).

It belongs to the ClpS family. Binds to the N-terminal domain of the chaperone ClpA.

In terms of biological role, involved in the modulation of the specificity of the ClpAP-mediated ATP-dependent protein degradation. The sequence is that of ATP-dependent Clp protease adapter protein ClpS from Bartonella quintana (strain Toulouse) (Rochalimaea quintana).